Consider the following 866-residue polypeptide: Protein aubergine (866 aa).

Position 1 is an N-acetylmethionine (methionine 1). The segment at 1-61 is disordered; it reads MNLPPNPVIA…GGGDAQVGPS (61 aa). A symmetric dimethylarginine mark is found at arginine 11, arginine 13, arginine 15, and arginine 17. The segment covering 46–56 has biased composition (gly residues); the sequence is ASGGNGGGGDA. A PAZ domain is found at 281-390; it reads TLYNILSDAI…IIPELARATG (110 aa). Positions 555-852 constitute a Piwi domain; it reads IVMVVMRSPN…LAFLVAESIN (298 aa).

The protein belongs to the argonaute family. Piwi subfamily. Component of the ping-pong piRNA processing (4P) complex consisting of krimp, aub and AGO3. Interacts (via N-terminus when symmetrically dimethylated on arginine residues) with krimp (via tudor domain); this interaction requires methylation of at least one N-terminal arginie residue. Interacts with vas and AGO3. May form part of a piRNA processing complex consisting of tud, aub and AGO3. Interacts (when symmetrically dimethylated on arginine residues) with tud; methylation and/or interaction requires association with piRNA. Interacts (via N-terminus and when associated with piRNA) with csul/PRMT5; the interaction recruits the PRMT5 methylosome complex to modify N-terminal arginines by symmetrical dimethylation but involves residues other than the arginines to be modified. Forms a complex with smg, twin, AGO3, nanos mRNA and piRNAs that targets the nanos 3'-untranslated region, in early embryos. Interacts with nanos mRNA and rump (in an RNA-dependent manner). Interacts with papi and vret. Interacts with me31B. Symmetrical dimethylation of arginines (sDMA) on Arg-11, Arg-13 and/or Arg-15 by csul/PRMT5/DART5, is required for binding to tud, localization to the pole plasm and association with the correct piRNAs. SDMA on Arg-11, Arg-13, Arg-15 and/or Arg-17 is required for binding to krimp and stable recruitment to subregions of the nuage. Methylation state does not affect protein stability. SDMA plays an important role in ping-pong amplification of piRNAs and is essential for function in vivo. Methylation state functions as an indicator of its piRNA binding state. PiRNA binding promotes sDMA modification; piRNA binding induces a conformational change that exposes the N-terminal arginines, making them available to the methylosome complex. Expressed in ovary. In the germarium, found in germline stem and cyst cells. In egg chambers from stage 6, expressed both in nurse cells and oocytes. In embryos, accumulates in the pole cells, although low expression is detected throughout the entire embryo. In testis, expressed in germline stem cells, gonialblast and spermatogonia cells (at protein level). In the adult brain, expressed in the ellipsoid body, the mushroom body subdivision in the peduncle and the cell body layer. Expressed specifically in alpha'/beta' and gamma neurons.

The protein localises to the cytoplasm. Its subcellular location is the cytosol. The protein resides in the perinuclear region. It localises to the cytoplasmic ribonucleoprotein granule. Component of the perinuclear meiotic nuage, a germline-specific subcellular membraneless ribonucleoprotein compartment involved in production of transposable element-repressing Piwi-interacting RNA (piRNA)-induced silencing complexes (piRISCs), which are essential for maintaining germline integrity during oogenesis; essential for the formation and/or structural integrity of nuage particles. Acts via the Piwi-interacting RNA (piRNA) metabolic process, which mediates the repression of transposable elements during meiosis by forming complexes composed of piRNAs and Piwi proteins and governs the methylation and subsequent repression of transposons. Directly binds piRNAs, a class of 24 to 30 nucleotide RNAs that are generated by a Dicer-independent mechanism and are primarily derived from transposons and other repeated sequence elements. Shows RNA cleavage or slicer activity; including aub-piRNA complexes from ovary and testis. When loaded with guide piRNAs recognizes and cleaves complementary RNAs to repress their expression and produce complementary piRNAs. Together with Piwi protein AGO3 recruited to subregions of the perinuclear nuage by krimp, which coordinates their activity in the ping-pong amplification step of secondary piRNA biogenesis. Krimp recruits piRNA bound aub and unbound AGO3, bringing them into close proximity to facilitate the loading onto AGO3 of freshly cut piRNAs generated by aub cleavage of target sequences; krimp recognizes the piRNA loading state of the Piwi proteins via symmetrically dimethylated arginine modification in their N-terminus. Important for asymmetric ping-pong amplification to bias production towards antisense piRNAs capable of silencing transposable elements. Required for the localization of mael and krimp to the meiotic nuage. In ovary, associates predominantly with antisense piRNAs that contain uridine at their 5' end. In testis, associates with Su(Ste) antisense piRNAs (most abundant class of piRNAs found in complex with aub in testes) and negatively regulates Ste expression, most likely by cleaving its transcripts. Also in testis, may repress translation of vas when associated with a piRNA derived from chromosome X, termed AT-chX-1, whose sequence shows strong complementarity to vas mRNA. Involved in repression of long interspersed nuclear elements (LINEs) including HeT-A, I-element and TART LINEs. Repression of specialized telomeric retroelements HeT-A and TART is involved in telomere regulation; Drosophila telomeres being maintained by transposition of specialized telomeric retroelements. Also involved in telomeric trans-silencing, a repression mechanism by which a transposon or a transgene inserted in subtelomeric heterochromatin has the capacity to repress in trans, in the female germline, a homologous transposon, or transgene located in euchromatin. Involved in the suppression of meiotic drive of sex chromosomes and autosomes. Involved in transposon silencing in the adult brain. Required for dorsal-ventral as well as anterior-posterior patterning of the egg. Required during oogenesis for primordial germ cell formation and activation of RNA interference. During early oogenesis, required for osk mRNA silencing and polarization of the microtubule cytoskeleton. During mid-oogenesis, required for osk mRNA localization to the posterior pole and efficient translation of osk and grk. During embryogenesis, required for posterior localization of nanos (nos) mRNA, independently of osk, and pole cell formation. Forms a complex with smg, twin, AGO3 and specific piRNAs that targets nanos mRNA (and probably other maternal mRNAS) for deadenylation promoting its decay during early embryogenesis. This is Protein aubergine from Drosophila melanogaster (Fruit fly).